The following is a 168-amino-acid chain: RxLR effector protein CRE8 (168 aa).

The N-terminal stretch at 1-23 (MRLPSILVVAASTLFLHYGYTSA) is a signal peptide. Residues 54 to 69 (RFLRDGKIAEGDNEER) carry the RxLR-dEER motif.

This sequence belongs to the RxLR effector family.

It is found in the secreted. The protein localises to the host cell. Effector that is involved in host plant infection. Contributes to virulence during the early infection stage, by inhibiting plant defense responses induced by both PAMP-triggered immunity (PTI) and effector-triggered immunity (ETI). In Phytophthora infestans (strain T30-4) (Potato late blight agent), this protein is RxLR effector protein CRE8.